A 205-amino-acid chain; its full sequence is Small ribosomal subunit protein uS4 (205 aa).

The tract at residues Asn18–Ser46 is disordered. The S4 RNA-binding domain occupies Arg94–Thr157.

Belongs to the universal ribosomal protein uS4 family. Part of the 30S ribosomal subunit. Contacts protein S5. The interaction surface between S4 and S5 is involved in control of translational fidelity.

One of the primary rRNA binding proteins, it binds directly to 16S rRNA where it nucleates assembly of the body of the 30S subunit. Functionally, with S5 and S12 plays an important role in translational accuracy. The chain is Small ribosomal subunit protein uS4 from Bradyrhizobium sp. (strain BTAi1 / ATCC BAA-1182).